The primary structure comprises 78 residues: uncharacterized protein (78 aa).

This is an uncharacterized protein from Dictyostelium discoideum (Social amoeba).